The primary structure comprises 439 residues: Oxysterol-binding protein 6 (439 aa).

Disordered regions lie at residues 1–40 (MSAK…SGAD) and 409–439 (ESST…QTTN). Composition is skewed to polar residues over residues 409-419 (ESSTPNLSKVD) and 429-439 (PVDNSIPQTTN).

Belongs to the OSBP family.

This chain is Oxysterol-binding protein 6 (osbF), found in Dictyostelium discoideum (Social amoeba).